Consider the following 485-residue polypeptide: Ribulose bisphosphate carboxylase large chain (485 aa).

Substrate-binding residues include N124 and T174. Catalysis depends on K176, which acts as the Proton acceptor. Residue K178 coordinates substrate. 3 residues coordinate Mg(2+): K202, D204, and E205. Position 202 is an N6-carboxylysine (K202). H294 acts as the Proton acceptor in catalysis. Positions 295, 327, and 379 each coordinate substrate.

Belongs to the RuBisCO large chain family. Type I subfamily. Heterohexadecamer of 8 large chains and 8 small chains. Requires Mg(2+) as cofactor.

It carries out the reaction 2 (2R)-3-phosphoglycerate + 2 H(+) = D-ribulose 1,5-bisphosphate + CO2 + H2O. It catalyses the reaction D-ribulose 1,5-bisphosphate + O2 = 2-phosphoglycolate + (2R)-3-phosphoglycerate + 2 H(+). Its function is as follows. RuBisCO catalyzes two reactions: the carboxylation of D-ribulose 1,5-bisphosphate, the primary event in carbon dioxide fixation, as well as the oxidative fragmentation of the pentose substrate in the photorespiration process. Both reactions occur simultaneously and in competition at the same active site. This Rhodopseudomonas palustris (strain BisB18) protein is Ribulose bisphosphate carboxylase large chain.